Here is a 611-residue protein sequence, read N- to C-terminus: tRNA uridine 5-carboxymethylaminomethyl modification enzyme MnmG (611 aa).

FAD is bound by residues glycine 12–glycine 17, valine 124, and serine 179. Residue glycine 271–phenylalanine 285 participates in NAD(+) binding. Residue glutamine 368 coordinates FAD.

This sequence belongs to the MnmG family. In terms of assembly, homodimer. Heterotetramer of two MnmE and two MnmG subunits. FAD serves as cofactor.

Its subcellular location is the cytoplasm. In terms of biological role, NAD-binding protein involved in the addition of a carboxymethylaminomethyl (cmnm) group at the wobble position (U34) of certain tRNAs, forming tRNA-cmnm(5)s(2)U34. This is tRNA uridine 5-carboxymethylaminomethyl modification enzyme MnmG from Mycoplasma mobile (strain ATCC 43663 / 163K / NCTC 11711) (Mesomycoplasma mobile).